Reading from the N-terminus, the 230-residue chain is PsbP-like protein 1, chloroplastic (230 aa).

This sequence belongs to the PsbP family.

The protein resides in the plastid. The protein localises to the chloroplast thylakoid lumen. Its function is as follows. Required for efficient repair of photodamaged PSII, but not tightly associated with the complex. This Arabidopsis thaliana (Mouse-ear cress) protein is PsbP-like protein 1, chloroplastic (PPL1).